The primary structure comprises 365 residues: Chorismate synthase (365 aa).

2 residues coordinate NADP(+): R48 and R54. Residues 131–133, 243–244, G288, 303–307, and R329 each bind FMN; these read RSS, NA, and KPTSS.

Belongs to the chorismate synthase family. As to quaternary structure, homotetramer. It depends on FMNH2 as a cofactor.

It catalyses the reaction 5-O-(1-carboxyvinyl)-3-phosphoshikimate = chorismate + phosphate. The protein operates within metabolic intermediate biosynthesis; chorismate biosynthesis; chorismate from D-erythrose 4-phosphate and phosphoenolpyruvate: step 7/7. Functionally, catalyzes the anti-1,4-elimination of the C-3 phosphate and the C-6 proR hydrogen from 5-enolpyruvylshikimate-3-phosphate (EPSP) to yield chorismate, which is the branch point compound that serves as the starting substrate for the three terminal pathways of aromatic amino acid biosynthesis. This reaction introduces a second double bond into the aromatic ring system. In Rhizobium leguminosarum bv. trifolii (strain WSM2304), this protein is Chorismate synthase.